The primary structure comprises 1509 residues: Dynein axonemal assembly factor 1 homolog (1509 aa).

6 LRR repeats span residues 34–56 (RLND…EEYT), 57–78 (ELKC…EKLS), 79–100 (KLKC…EPCR), 101–122 (ELDT…GTNI), 125–146 (VLNT…SDLV), and 150–171 (TLSV…KIFE). In terms of domain architecture, LRRCT spans 185-223 (PVVSRLPQYRKTLILACKELTYLDSRPVFPRDRACAEAW). Disordered regions lie at residues 252–280 (CTIR…DDTC), 306–327 (HPTS…ATSS), 962–1008 (SGDL…DSKN), and 1103–1122 (TLQT…KLRN). The span at 309–318 (SESGASTSSS) shows a compositional bias: low complexity. Acidic residues predominate over residues 978–990 (SESEDYDTADDEY). Over residues 1103-1112 (TLQTSFSTVG) the composition is skewed to polar residues.

The protein belongs to the DNAAF1 family.

The protein localises to the cell projection. Its subcellular location is the cilium. Cilium-specific protein required for cilia structures. The chain is Dynein axonemal assembly factor 1 homolog (dtr) from Drosophila yakuba (Fruit fly).